We begin with the raw amino-acid sequence, 55 residues long: uncharacterized protein (55 aa).

This is an uncharacterized protein from Sulfolobus islandicus rod-shaped virus 1 (SIRV-1).